A 379-amino-acid chain; its full sequence is Chaperone protein DnaJ (379 aa).

One can recognise a J domain in the interval 5-70; that stretch reads DYYEVLGVSR…QKRAAYDQYG (66 aa). A CR-type zinc finger spans residues 134–212; sequence GVTKEIRIPT…CHGHGRVEKS (79 aa). C147, C150, C164, C167, C186, C189, C200, and C203 together coordinate Zn(2+). CXXCXGXG motif repeat units follow at residues 147-154, 164-171, 186-193, and 200-207; these read CDVCHGSG, CPTCHGAG, CPHCHGRG, and CNKCHGHG.

Belongs to the DnaJ family. In terms of assembly, homodimer. It depends on Zn(2+) as a cofactor.

It localises to the cytoplasm. Participates actively in the response to hyperosmotic and heat shock by preventing the aggregation of stress-denatured proteins and by disaggregating proteins, also in an autonomous, DnaK-independent fashion. Unfolded proteins bind initially to DnaJ; upon interaction with the DnaJ-bound protein, DnaK hydrolyzes its bound ATP, resulting in the formation of a stable complex. GrpE releases ADP from DnaK; ATP binding to DnaK triggers the release of the substrate protein, thus completing the reaction cycle. Several rounds of ATP-dependent interactions between DnaJ, DnaK and GrpE are required for fully efficient folding. Also involved, together with DnaK and GrpE, in the DNA replication of plasmids through activation of initiation proteins. In Yersinia pseudotuberculosis serotype O:1b (strain IP 31758), this protein is Chaperone protein DnaJ.